Here is a 29-residue protein sequence, read N- to C-terminus: Small toxic protein TisB (29 aa).

The chain crosses the membrane as a helical span at residues 6 to 28; sequence IAILILKLIVAALQLLDAVLKYL.

Its subcellular location is the cell inner membrane. Its function is as follows. Toxic component of a type I toxin-antitoxin (TA) system. Overexpression causes cessation of growth, induces stress-response, a number of membrane protein genes, and leads to cell death. Inhibits ATP synthesis, ATP levels drop drastically quickly after induction. Part of the programmed response to DNA damage; damage leads to increased accumulation of the protein which slows or stops bacterial growth, probably allowing DNA repair before cells continue to grow. This is Small toxic protein TisB (tisB) from Escherichia coli (strain K12).